The following is a 410-amino-acid chain: Arginine deiminase (410 aa).

The active-site Amidino-cysteine intermediate is the Cys-400.

This sequence belongs to the arginine deiminase family.

It is found in the cytoplasm. It catalyses the reaction L-arginine + H2O = L-citrulline + NH4(+). It functions in the pathway amino-acid degradation; L-arginine degradation via ADI pathway; carbamoyl phosphate from L-arginine: step 1/2. This is Arginine deiminase (arcA) from Borreliella burgdorferi (strain ATCC 35210 / DSM 4680 / CIP 102532 / B31) (Borrelia burgdorferi).